Reading from the N-terminus, the 394-residue chain is Elongation factor Tu (394 aa).

Positions 10 to 204 (KPHVNVGTIG…ALDTYIPEPE (195 aa)) constitute a tr-type G domain. Residues 19-26 (GHVDHGKT) are G1. GTP is bound at residue 19-26 (GHVDHGKT). T26 contributes to the Mg(2+) binding site. The G2 stretch occupies residues 60–64 (GITIN). The tract at residues 81-84 (DCPG) is G3. GTP is bound by residues 81–85 (DCPGH) and 136–139 (NKCD). Residues 136–139 (NKCD) are G4. The tract at residues 174–176 (SAL) is G5.

This sequence belongs to the TRAFAC class translation factor GTPase superfamily. Classic translation factor GTPase family. EF-Tu/EF-1A subfamily. As to quaternary structure, monomer.

The protein localises to the cytoplasm. It catalyses the reaction GTP + H2O = GDP + phosphate + H(+). Functionally, GTP hydrolase that promotes the GTP-dependent binding of aminoacyl-tRNA to the A-site of ribosomes during protein biosynthesis. The polypeptide is Elongation factor Tu (Shewanella denitrificans (strain OS217 / ATCC BAA-1090 / DSM 15013)).